The chain runs to 305 residues: Insulin-like growth factor-binding protein 2 (305 aa).

The N-terminal stretch at Met-1–Ala-34 is a signal peptide. An IGFBP N-terminal domain is found at Val-36–Arg-118. Cystine bridges form between Cys-40/Cys-68, Cys-43/Cys-70, Cys-51/Cys-71, Cys-59/Cys-74, Cys-82/Cys-95, Cys-89/Cys-115, Cys-207/Cys-241, Cys-252/Cys-263, and Cys-265/Cys-286. The Thyroglobulin type-1 domain maps to Arg-204 to Cys-286. The Cell attachment site signature appears at Arg-281–Asp-283.

As to quaternary structure, interacts with IGF1. Interacts with IGF2. Interacts (via RGD motif) with integrin alpha5/ITGA5; this interaction induces cell migration, adhesion or apoptosis according to the context. Interacts with PTPRB; this interaction leads to PTPRB dimerization and inactivation. In terms of processing, cleaved by MMP9 leading to release of free IGF2 from IGFBP2-IGF2 complex, which contributes to enhance the motility and the growth of astrocytes. Post-translationally, O-glycosylated. As to expression, highly expressed in adult liver, but also in kidney, lung, brain, spleen, testis and ovary.

Its subcellular location is the secreted. In terms of biological role, multifunctional protein that plays a critical role in regulating the availability of IGFs such as IGF1 and IGF2 to their receptors and thereby regulates IGF-mediated cellular processes including proliferation, differentiation, and apoptosis in a cell-type specific manner. Functions coordinately with receptor protein tyrosine phosphatase beta/PTPRB and the IGF1 receptor to regulate IGF1-mediated signaling by stimulating the phosphorylation of PTEN leading to its inactivation and AKT1 activation. Plays a positive role in cell migration via interaction with integrin alpha5/ITGA5 through an RGD motif. Additionally, interaction with ITGA5/ITGB1 enhances the adhesion of endothelial progenitor cells to endothelial cells. Upon mitochondrial damage, facilitates apoptosis with ITGA5 of podocytes, and then activates the phosphorylation of focal adhesion kinase (FAK)-mediated mitochondrial injury. The sequence is that of Insulin-like growth factor-binding protein 2 (Igfbp2) from Mus musculus (Mouse).